A 189-amino-acid polypeptide reads, in one-letter code: Peptidyl-tRNA hydrolase (189 aa).

Residue Tyr-15 participates in tRNA binding. His-20 (proton acceptor) is an active-site residue. Residues Phe-66, Asn-68, and Asn-114 each coordinate tRNA.

This sequence belongs to the PTH family. In terms of assembly, monomer.

It localises to the cytoplasm. It carries out the reaction an N-acyl-L-alpha-aminoacyl-tRNA + H2O = an N-acyl-L-amino acid + a tRNA + H(+). Functionally, hydrolyzes ribosome-free peptidyl-tRNAs (with 1 or more amino acids incorporated), which drop off the ribosome during protein synthesis, or as a result of ribosome stalling. Its function is as follows. Catalyzes the release of premature peptidyl moieties from peptidyl-tRNA molecules trapped in stalled 50S ribosomal subunits, and thus maintains levels of free tRNAs and 50S ribosomes. This is Peptidyl-tRNA hydrolase from Streptococcus pneumoniae (strain JJA).